Consider the following 132-residue polypeptide: Large ribosomal subunit protein uL14 (132 aa).

This sequence belongs to the universal ribosomal protein uL14 family. As to quaternary structure, part of the 50S ribosomal subunit. Forms a cluster with proteins L3 and L24e, part of which may contact the 16S rRNA in 2 intersubunit bridges.

Its function is as follows. Binds to 23S rRNA. Forms part of two intersubunit bridges in the 70S ribosome. This chain is Large ribosomal subunit protein uL14, found in Natronomonas pharaonis (strain ATCC 35678 / DSM 2160 / CIP 103997 / JCM 8858 / NBRC 14720 / NCIMB 2260 / Gabara) (Halobacterium pharaonis).